A 187-amino-acid polypeptide reads, in one-letter code: Coiled-coil domain-containing protein 201 (187 aa).

2 disordered regions span residues 1-79 (MEPG…PPAT) and 92-159 (KESS…RAAA). A coiled-coil region spans residues 111-131 (LTQRQRQRQQQQQQQESLRAK). Over residues 147–157 (GRKRRDPKKRA) the composition is skewed to basic residues.

The protein is Coiled-coil domain-containing protein 201 of Homo sapiens (Human).